The following is a 432-amino-acid chain: Glutamyl-tRNA reductase (432 aa).

Residues 49-52 (TCNR), S101, 106-108 (ESQ), and Q112 each bind substrate. C50 functions as the Nucleophile in the catalytic mechanism. 181-186 (GAGETI) contacts NADP(+). The segment at 410-432 (KPGYHHPTLQTTIVKTDETDPAS) is disordered.

This sequence belongs to the glutamyl-tRNA reductase family. In terms of assembly, homodimer.

The enzyme catalyses (S)-4-amino-5-oxopentanoate + tRNA(Glu) + NADP(+) = L-glutamyl-tRNA(Glu) + NADPH + H(+). The protein operates within porphyrin-containing compound metabolism; protoporphyrin-IX biosynthesis; 5-aminolevulinate from L-glutamyl-tRNA(Glu): step 1/2. Its function is as follows. Catalyzes the NADPH-dependent reduction of glutamyl-tRNA(Glu) to glutamate 1-semialdehyde (GSA). The protein is Glutamyl-tRNA reductase of Xylella fastidiosa (strain M23).